A 700-amino-acid chain; its full sequence is Mitogen-activated protein kinase 9 (700 aa).

The Protein kinase domain occupies 107–398 (YRIQEVIGKG…AEEALTDPYF (292 aa)). ATP-binding positions include 113–121 (IGKGSYGVV) and K136. Residue D233 is the Proton acceptor of the active site. At T269 the chain carries Phosphothreonine. The TXY signature appears at 269 to 271 (TDY). Y271 carries the phosphotyrosine modification. The segment at 475–523 (EESNGSGSAIPMERKHASLPRSTTVHSTPIPPKEQPLAASLKSSRPVSD) is disordered.

Belongs to the protein kinase superfamily. CMGC Ser/Thr protein kinase family. MAP kinase subfamily. In terms of processing, dually phosphorylated on Thr-269 and Tyr-271, which activates the enzyme.

It carries out the reaction L-seryl-[protein] + ATP = O-phospho-L-seryl-[protein] + ADP + H(+). The catalysed reaction is L-threonyl-[protein] + ATP = O-phospho-L-threonyl-[protein] + ADP + H(+). Its activity is regulated as follows. Activated by threonine and tyrosine phosphorylation. This Oryza sativa subsp. japonica (Rice) protein is Mitogen-activated protein kinase 9 (MPK9).